Here is a 275-residue protein sequence, read N- to C-terminus: UBX domain-containing protein 8 (275 aa).

Position 1 (Met-1) is a topological domain, cytoplasmic. The helical transmembrane segment at 2-22 (ASRGVVGIFLLSALPLLCLEL) threads the bilayer. The Lumenal portion of the chain corresponds to 23 to 33 (RRGKPDLGIKD). A helical membrane pass occupies residues 34–54 (LILLCGRIFLLLALLTLIISV). The Cytoplasmic segment spans residues 55 to 275 (TTSWVNSFKP…LNVEEKEQSS (221 aa)). Residues 137-181 (DEDLELDSESQTSFETSNREAAKRRNLPNSVTNISPPAEQPTKKE) are disordered. In terms of domain architecture, UBX spans 192 to 268 (TAEEVVTVAL…GITVDTVLNV (77 aa)).

As to quaternary structure, interacts with SYVN1 and VCP.

It is found in the endoplasmic reticulum membrane. Its function is as follows. Involved in endoplasmic reticulum-associated degradation (ERAD) for misfolded lumenal proteins, possibly by tethering VCP to the endoplasmic reticulum membrane. May play a role in reproduction. Functionally, may play a role in reproduction. The sequence is that of UBX domain-containing protein 8 (UBXN8) from Bos taurus (Bovine).